An 88-amino-acid polypeptide reads, in one-letter code: uncharacterized protein (88 aa).

The signal sequence occupies residues 1–23 (MAVSGLRLTIVWGLLVLILTCQA). The segment covering 25–40 (DKPEGKPDEQPHDSGK) has biased composition (basic and acidic residues). The tract at residues 25–45 (DKPEGKPDEQPHDSGKNSEPA) is disordered.

The protein localises to the secreted. This is an uncharacterized protein from Bos taurus (Bovine).